Reading from the N-terminus, the 142-residue chain is Galactose-6-phosphate isomerase subunit LacA (142 aa).

Belongs to the LacAB/RpiB family. As to quaternary structure, heteromultimeric protein consisting of LacA and LacB.

It carries out the reaction aldehydo-D-galactose 6-phosphate = keto-D-tagatose 6-phosphate. The protein operates within carbohydrate metabolism; D-galactose 6-phosphate degradation; D-tagatose 6-phosphate from D-galactose 6-phosphate: step 1/1. This Staphylococcus haemolyticus (strain JCSC1435) protein is Galactose-6-phosphate isomerase subunit LacA.